Consider the following 2642-residue polypeptide: Fusarielin synthase FSL1 (2642 aa).

A Ketosynthase family 3 (KS3) domain is found at asparagine 6 to alanine 450. Residues cysteine 179, histidine 318, and histidine 370 each act as for beta-ketoacyl synthase activity in the active site. Residues valine 566–lysine 890 form a malonyl-CoA:ACP transacylase (MAT) domain region. Catalysis depends on serine 659, which acts as the For malonyltransferase activity. An N-terminal hotdog fold region spans residues histidine 965–glutamate 1101. Positions histidine 965 to aspartate 1279 are dehydratase (DH) domain. A PKS/mFAS DH domain is found at histidine 965 to arginine 1280. Residue histidine 997 is the Proton acceptor; for dehydratase activity of the active site. A C-terminal hotdog fold region spans residues methionine 1126–arginine 1280. The Proton donor; for dehydratase activity role is filled by aspartate 1189. The tract at residues asparagine 1423–aspartate 1622 is methyltransferase (MET) domain. The ketoreductase (KR) domain stretch occupies residues threonine 2244 to serine 2423. One can recognise a Carrier domain in the interval glutamine 2556–leucine 2635. Serine 2595 carries the O-(pantetheine 4'-phosphoryl)serine modification.

Requires pantetheine 4'-phosphate as cofactor.

It functions in the pathway secondary metabolite biosynthesis. Its function is as follows. Reducing polyketide synthase; part of the gene cluster that mediates the biosynthesis of fusarielins F, G and H, decaketide compounds with 5 methylations and a decaline core that act as mycoestrogens as they stimulate growth of MCF-7 breast cancer cells. The initial compound in the pathway is produced by the reducing polyketide synthase FSL1. FSL1 lacks an active enoyl reductase (ER) domain and biosynthesis of fusarielins relies on the trans-acting enoyl reductase FSL5, before it is released through hydrolysis catalyzed by the thioesterase FSL2. Fusarielins F, G, and H have a C11=C12 cis double bond and is fully reduced between C10 and C11 and between C12 and C13. FSL3 can be involved in the formation of the C11=C12 cis double bond by moving a hypothetical C10=C11 or C12=C13 trans double bond to form prefusarielin. Prefusarielin is oxygenated at C15 and C16 by the cytochrome P450 monooxygenase FSL4, resulting in fusarielin F, which subsequently is epoxidized into fusarielin G by the same enzyme. The final step in the pathway is a reduction of the carboxylic acid moiety to yield fusarielin H via a still undetermined mechanism. The chain is Fusarielin synthase FSL1 from Gibberella zeae (strain ATCC MYA-4620 / CBS 123657 / FGSC 9075 / NRRL 31084 / PH-1) (Wheat head blight fungus).